The primary structure comprises 218 residues: Glycoprotein UL1 (218 aa).

The N-terminal stretch at 1–27 is a signal peptide; that stretch reads MGVQCNSKLLLLAVLITIILSSILVQA. The chain crosses the membrane as a helical span at residues 178–198; it reads VATHVGWTATVVIIICVLTYV.

It belongs to the RL11 family.

The protein localises to the virion membrane. This chain is Glycoprotein UL1 (UL1), found in Homo sapiens (Human).